Reading from the N-terminus, the 88-residue chain is Large ribosomal subunit protein eL15 (88 aa).

It belongs to the eukaryotic ribosomal protein eL15 family.

In Brassica napus (Rape), this protein is Large ribosomal subunit protein eL15 (RPL15).